The chain runs to 758 residues: Vitamin K-dependent gamma-carboxylase (758 aa).

The segment at Met1–Ala22 is disordered. Ala2 carries the N-acetylalanine modification. The Cytoplasmic segment spans residues Ala2–Asp60. The chain crosses the membrane as a helical span at residues Pro61–Gln81. Topologically, residues Glu82 to Asp113 are lumenal. The cysteines at positions 99 and 450 are disulfide-linked. Residues Trp114 to Cys134 traverse the membrane as a helical segment. At Tyr135–Arg136 the chain is on the cytoplasmic side. The chain crosses the membrane as a helical span at residues Ile137–Trp157. The Lumenal portion of the chain corresponds to Asn158–Gln292. Lys218 functions as the Proton acceptor in the catalytic mechanism. The chain crosses the membrane as a helical span at residues Leu293–Pro313. Residues Glu314 to Gln361 lie on the Cytoplasmic side of the membrane. A helical membrane pass occupies residues Leu362–Phe382. The Lumenal portion of the chain corresponds to Leu383–Phe758. 2 N-linked (GlcNAc...) asparagine glycosylation sites follow: Asn459 and Asn550. The tract at residues Gly732–Phe758 is disordered. Over residues Asn735–Pro747 the composition is skewed to polar residues.

Belongs to the vitamin K-dependent gamma-carboxylase family. In terms of assembly, monomer. May interact with CALU.

It is found in the endoplasmic reticulum membrane. It carries out the reaction 4-carboxy-L-glutamyl-[protein] + 2,3-epoxyphylloquinone + H2O + H(+) = phylloquinol + L-glutamyl-[protein] + CO2 + O2. Mediates the vitamin K-dependent carboxylation of glutamate residues to calcium-binding gamma-carboxyglutamate (Gla) residues with the concomitant conversion of the reduced hydroquinone form of vitamin K to vitamin K epoxide. Catalyzes gamma-carboxylation of various proteins, such as blood coagulation factors (F2, F7, F9 and F10), osteocalcin (BGLAP) or matrix Gla protein (MGP). The polypeptide is Vitamin K-dependent gamma-carboxylase (GGCX) (Homo sapiens (Human)).